The following is a 216-amino-acid chain: MAAGPRNSVLLAFALLCLPWPQEVGTFPAMPLSSLFANAVLRAQHLHQLAADTYKEFERAYIPEGQRYSIQNAQAAFCFSETIPAPTGKDEAQQRSDVELLRFSLLLIQSWLGPVQFLSRVFTNSLVFGTSDRVYEKLKDLEEGIQALMRELEDGSPRGGQILKQTYDKFDTNLRSDDALLKNYGLLSCFKKDLHKAETYLRVMKCRRFVESSCAF.

The signal sequence occupies residues 1 to 26; it reads MAAGPRNSVLLAFALLCLPWPQEVGT. Zn(2+) is bound at residue His45. Cys78 and Cys189 form a disulfide bridge. Ser131 is modified (phosphoserine). Glu198 is a binding site for Zn(2+). Cys206 and Cys214 are oxidised to a cystine.

Belongs to the somatotropin/prolactin family.

It is found in the secreted. In terms of biological role, plays an important role in growth control. Its major role in stimulating body growth is to stimulate the liver and other tissues to secrete IGF1. It stimulates both the differentiation and proliferation of myoblasts. It also stimulates amino acid uptake and protein synthesis in muscle and other tissues. The chain is Somatotropin (GH1) from Felis catus (Cat).